The following is a 146-amino-acid chain: Large ribosomal subunit protein uL13 (146 aa).

The tract at residues 125–146 (YAGPKHPHAAQQPKVYEPRPRG) is disordered.

This sequence belongs to the universal ribosomal protein uL13 family. As to quaternary structure, part of the 50S ribosomal subunit.

Its function is as follows. This protein is one of the early assembly proteins of the 50S ribosomal subunit, although it is not seen to bind rRNA by itself. It is important during the early stages of 50S assembly. The polypeptide is Large ribosomal subunit protein uL13 (Roseiflexus sp. (strain RS-1)).